Reading from the N-terminus, the 368-residue chain is Phosphate acyltransferase (368 aa).

The interval 334-368 (AAPLGESGRDADGAGQASPSAGQPAEPSAALSSKT) is disordered.

This sequence belongs to the PlsX family. As to quaternary structure, homodimer. Probably interacts with PlsY.

The protein resides in the cytoplasm. It catalyses the reaction a fatty acyl-[ACP] + phosphate = an acyl phosphate + holo-[ACP]. It functions in the pathway lipid metabolism; phospholipid metabolism. In terms of biological role, catalyzes the reversible formation of acyl-phosphate (acyl-PO(4)) from acyl-[acyl-carrier-protein] (acyl-ACP). This enzyme utilizes acyl-ACP as fatty acyl donor, but not acyl-CoA. This is Phosphate acyltransferase from Burkholderia thailandensis (strain ATCC 700388 / DSM 13276 / CCUG 48851 / CIP 106301 / E264).